The sequence spans 126 residues: MTASTALTVAIWIGVMLIGGIGSVLRFLVDRSVARRLARTFPYGTLTVNITGAALLGFLAGLALPKDAALLAGTGFVGAYTTFSTWMLETQRLGEDRQMVSALANIVVSVVLGLAAALLGQWIAQI.

4 helical membrane-spanning segments follow: residues Thr-5–Leu-25, Gly-44–Leu-64, Ala-68–Leu-88, and Met-99–Leu-119. Gly-78 and Thr-81 together coordinate Na(+).

Belongs to the fluoride channel Fluc/FEX (TC 1.A.43) family.

It is found in the cell membrane. The enzyme catalyses fluoride(in) = fluoride(out). Its activity is regulated as follows. Na(+) is not transported, but it plays an essential structural role and its presence is essential for fluoride channel function. Its function is as follows. Fluoride-specific ion channel. Important for reducing fluoride concentration in the cell, thus reducing its toxicity. The protein is Fluoride-specific ion channel FluC 2 of Mycobacterium bovis (strain ATCC BAA-935 / AF2122/97).